Consider the following 171-residue polypeptide: Small ribosomal subunit protein uS5 (171 aa).

The region spanning Leu-15–Ile-78 is the S5 DRBM domain.

This sequence belongs to the universal ribosomal protein uS5 family. In terms of assembly, part of the 30S ribosomal subunit. Contacts proteins S4 and S8.

Functionally, with S4 and S12 plays an important role in translational accuracy. Located at the back of the 30S subunit body where it stabilizes the conformation of the head with respect to the body. The sequence is that of Small ribosomal subunit protein uS5 from Onion yellows phytoplasma (strain OY-M).